Here is a 102-residue protein sequence, read N- to C-terminus: Integration host factor subunit alpha (102 aa).

The protein belongs to the bacterial histone-like protein family. As to quaternary structure, heterodimer of an alpha and a beta chain.

Functionally, this protein is one of the two subunits of integration host factor, a specific DNA-binding protein that functions in genetic recombination as well as in transcriptional and translational control. The chain is Integration host factor subunit alpha from Albidiferax ferrireducens (strain ATCC BAA-621 / DSM 15236 / T118) (Rhodoferax ferrireducens).